Consider the following 335-residue polypeptide: Transaldolase (335 aa).

The Schiff-base intermediate with substrate role is filled by K135.

It belongs to the transaldolase family. Type 1 subfamily. In terms of assembly, homodimer.

It is found in the cytoplasm. It carries out the reaction D-sedoheptulose 7-phosphate + D-glyceraldehyde 3-phosphate = D-erythrose 4-phosphate + beta-D-fructose 6-phosphate. It participates in carbohydrate degradation; pentose phosphate pathway; D-glyceraldehyde 3-phosphate and beta-D-fructose 6-phosphate from D-ribose 5-phosphate and D-xylulose 5-phosphate (non-oxidative stage): step 2/3. Its function is as follows. Transaldolase is important for the balance of metabolites in the pentose-phosphate pathway. This Prochlorococcus marinus (strain SARG / CCMP1375 / SS120) protein is Transaldolase.